A 213-amino-acid polypeptide reads, in one-letter code: Ribonuclease HII (213 aa).

One can recognise an RNase H type-2 domain in the interval 2 to 213; it reads GRVAGIDEAG…KEWATWKRLR (212 aa). Asp8, Glu9, and Asp113 together coordinate a divalent metal cation.

This sequence belongs to the RNase HII family. It depends on Mn(2+) as a cofactor. The cofactor is Mg(2+).

It is found in the cytoplasm. The enzyme catalyses Endonucleolytic cleavage to 5'-phosphomonoester.. Functionally, endonuclease that specifically degrades the RNA of RNA-DNA hybrids. This is Ribonuclease HII from Thermofilum pendens (strain DSM 2475 / Hrk 5).